Consider the following 439-residue polypeptide: 26S proteasome regulatory subunit 4 (439 aa).

Disordered stretches follow at residues 1-48 (MGQN…AMKL) and 82-104 (ERLKPQDEKNEEERSKVDDLRGT). Composition is skewed to basic and acidic residues over residues 12 to 25 (GEKKDDKDKKKKYE) and 82 to 102 (ERLKPQDEKNEEERSKVDDLR). 225–232 (GPPGTGKT) lines the ATP pocket.

This sequence belongs to the AAA ATPase family. Interacts with PSMD5.

Its subcellular location is the cytoplasm. The protein resides in the nucleus. Its function is as follows. The 26S proteasome is involved in the ATP-dependent degradation of ubiquitinated proteins. The regulatory (or ATPase) complex confers ATP dependency and substrate specificity to the 26S complex. In Drosophila melanogaster (Fruit fly), this protein is 26S proteasome regulatory subunit 4 (Rpt2).